The chain runs to 147 residues: Hemoglobin subunit epsilon-M (147 aa).

The Globin domain occupies H3–H147. Phosphoserine occurs at positions 14 and 51. H64 and H93 together coordinate heme b.

This sequence belongs to the globin family. Red blood cells.

Hemoglobin epsilon chain is a beta-type chain found in early embryos. The sequence is that of Hemoglobin subunit epsilon-M (HBE1) from Didelphis virginiana (North American opossum).